The primary structure comprises 114 residues: MNTDVLNQQKIEELSAEIGSDNVPVLLDIFLGEMDSYIGTLTELQGSEQLLYLKEISHALKSSAASFGADRLCERAIAIDKKAKANQLQEQGMETSEMLALLHITRDAYRSWTN.

In terms of domain architecture, HPt spans 19-114 (GSDNVPVLLD…TRDAYRSWTN (96 aa)). His-58 carries the phosphohistidine modification.

In terms of assembly, monomer.

In terms of biological role, phosphorelay protein which receives sensory signals from LuxN and LuxP and transmits them to LuxO, at low cell density. LuxN and LuxP transfer a phosphoryl group to LuxU on His-58 and this phosphoryl group is further transferred to LuxO. At high cell density, as LuxU could function to establish an equilibrium between the aspartyl-phosphate of LuxN and the aspartyl-phosphate of LuxO, LuxU transfers phosphate from LuxO to LuxN (and probably LuxP) and finally phosphate is drained from the system. The protein is Phosphorelay protein LuxU (luxU) of Vibrio harveyi (Beneckea harveyi).